A 591-amino-acid chain; its full sequence is L-fucose isomerase (591 aa).

Active-site proton acceptor residues include Glu338 and Asp362. Residues Glu338, Asp362, and His529 each coordinate Mn(2+).

This sequence belongs to the L-fucose isomerase family. It depends on Mn(2+) as a cofactor.

It is found in the cytoplasm. The enzyme catalyses L-fucose = L-fuculose. It functions in the pathway carbohydrate degradation; L-fucose degradation; L-lactaldehyde and glycerone phosphate from L-fucose: step 1/3. Functionally, converts the aldose L-fucose into the corresponding ketose L-fuculose. The polypeptide is L-fucose isomerase (Phocaeicola vulgatus (strain ATCC 8482 / DSM 1447 / JCM 5826 / CCUG 4940 / NBRC 14291 / NCTC 11154) (Bacteroides vulgatus)).